We begin with the raw amino-acid sequence, 245 residues long: 1-(5-phosphoribosyl)-5-[(5-phosphoribosylamino)methylideneamino] imidazole-4-carboxamide isomerase (245 aa).

Asp-8 serves as the catalytic Proton acceptor. Catalysis depends on Asp-129, which acts as the Proton donor.

This sequence belongs to the HisA/HisF family.

It is found in the cytoplasm. It catalyses the reaction 1-(5-phospho-beta-D-ribosyl)-5-[(5-phospho-beta-D-ribosylamino)methylideneamino]imidazole-4-carboxamide = 5-[(5-phospho-1-deoxy-D-ribulos-1-ylimino)methylamino]-1-(5-phospho-beta-D-ribosyl)imidazole-4-carboxamide. It participates in amino-acid biosynthesis; L-histidine biosynthesis; L-histidine from 5-phospho-alpha-D-ribose 1-diphosphate: step 4/9. The protein is 1-(5-phosphoribosyl)-5-[(5-phosphoribosylamino)methylideneamino] imidazole-4-carboxamide isomerase of Rhodopseudomonas palustris (strain ATCC BAA-98 / CGA009).